A 126-amino-acid polypeptide reads, in one-letter code: Fluoride-specific ion channel FluC (126 aa).

The next 4 helical transmembrane spans lie at 4–24 (PLLS…FLGL), 33–53 (IPLG…FAMA), 67–87 (FVIT…IEIV), and 97–117 (MAML…CLGL). Na(+) is bound by residues glycine 74 and threonine 77.

It belongs to the fluoride channel Fluc/FEX (TC 1.A.43) family.

The protein localises to the cell inner membrane. The catalysed reaction is fluoride(in) = fluoride(out). With respect to regulation, na(+) is not transported, but it plays an essential structural role and its presence is essential for fluoride channel function. Its function is as follows. Fluoride-specific ion channel. Important for reducing fluoride concentration in the cell, thus reducing its toxicity. This Acinetobacter baumannii (strain ATCC 17978 / DSM 105126 / CIP 53.77 / LMG 1025 / NCDC KC755 / 5377) protein is Fluoride-specific ion channel FluC.